The sequence spans 521 residues: MTIKTKAELLNKWKPLLEGEGLPEIANSKQAIIAKIFENQEKDFQTAPEYKDEKIAQAFGSFLTEAEIGGDHGYNATNIAAGQTSGAVTQIGPAVMGMVRRAIPNLIAFDICGVQPMNSPTGQVFALRAVYGKDPIASGAKEAFHPMYGPDAMFSGQGAAKKFAALKASDTLEVGTIYTHFFQDTGTVYLQATEVKQIDTSANDAAKLDAEIKKQMEAGVLVEIAEGMATSIAELQEGFNGSTDNPWNEMGFRIDKQVIEAKSRQLKAAYSIELAQDLRAVHGMDADAELSGILATEIMLEINREVVDWINYSAQVGKSGMTLTPGSKAGVFDFQDPIDIRGARWAGESFKALLFQIDKEAVEIARQTGRGEGNFIIASRNVVNVLASVDTGISYAAQGLATGFNTDTTKSVFAGVLGGKYRVYIDQYAKQDYFTVGYKGPNEMDAGIYYAPYVALTPLRGSDPKNFQPVMGFKTRYGIGINPFAESAAQAPASRIQSGMPSILNSLGKNAYFRRVYVKGI.

Belongs to the T4 phage capsid protein family. As to quaternary structure, homohexamer. Interacts with the portal protein. Interacts with the capsid vertex protein that forms pentamers. Interacts with hoc; one hoc molecule associates with each capsid hexamer. Interacts with soc; this interaction reinforces the capsid structure. A total of 960 subunits of the major capsid protein forms the 160 hexamers. A proteolytic cleavage by the prohead core protein protease gives rise to the mature major capsid protein during virus maturation.

The protein resides in the virion. In terms of biological role, major capsid protein that self-associates to form hexamers, building most of the capsid in association with pentons made of the capsid vertex protein and one dodecamer of the portal protein. The major capsid protein self-associates to form 160 hexamers, building most of the T=13 laevo capsid. Folding of major capsid protein requires the assistance of two chaperones, the host chaperone groL acting with the phage encoded gp23-specific chaperone, gp31. The capsid also contains two nonessential outer capsid proteins, Hoc and Soc, which decorate the capsid surface. Through binding to adjacent gp23 subunits, Soc reinforces the capsid structure. The polypeptide is Major capsid protein (23) (Escherichia coli O157:H7 (Bacteriophage AR1)).